A 380-amino-acid polypeptide reads, in one-letter code: Histidinol-phosphate aminotransferase (380 aa).

The residue at position 235 (K235) is an N6-(pyridoxal phosphate)lysine.

It belongs to the class-II pyridoxal-phosphate-dependent aminotransferase family. Histidinol-phosphate aminotransferase subfamily. As to quaternary structure, homodimer. It depends on pyridoxal 5'-phosphate as a cofactor.

It catalyses the reaction L-histidinol phosphate + 2-oxoglutarate = 3-(imidazol-4-yl)-2-oxopropyl phosphate + L-glutamate. It functions in the pathway amino-acid biosynthesis; L-histidine biosynthesis; L-histidine from 5-phospho-alpha-D-ribose 1-diphosphate: step 7/9. The sequence is that of Histidinol-phosphate aminotransferase from Rhodococcus jostii (strain RHA1).